Reading from the N-terminus, the 558-residue chain is Energy-dependent translational throttle protein EttA (558 aa).

ABC transporter domains lie at 6 to 256 (YTMK…AVQG) and 322 to 552 (VEVD…RVTH). 38–45 (GPNGAGKS) lines the ATP pocket. Residues 94–136 (GDIKIKLDRFNEVAELMATDYTDELMEEMGRLQEELDHADAWD) are arm. Residues 239 to 320 (GNYSTYLEKK…IPVGPRLGNV (82 aa)) form a ptIM region. 354–361 (GPNGVGKT) contributes to the ATP binding site.

Belongs to the ABC transporter superfamily. ABCF family. Translational throttle EttA subfamily. Monomer. Probably contacts ribosomal proteins L1, L5, L33 and S7, the 16S and 23S rRNA and the P-site containing tRNA(fMet).

It localises to the cytoplasm. The enzyme catalyses ATP + H2O = ADP + phosphate + H(+). In terms of biological role, a translation factor that gates the progression of the 70S ribosomal initiation complex (IC, containing tRNA(fMet) in the P-site) into the translation elongation cycle by using a mechanism sensitive to the ATP/ADP ratio. Binds to the 70S ribosome E-site where it modulates the state of the translating ribosome during subunit translocation. ATP hydrolysis probably frees it from the ribosome, which can enter the elongation phase. This chain is Energy-dependent translational throttle protein EttA, found in Mycobacterium tuberculosis (strain CDC 1551 / Oshkosh).